The primary structure comprises 232 residues: Phycobilisome rod-core linker polypeptide cpcG (232 aa).

Residues 11–191 (STQNQRVDGY…PRYGADFKEK (181 aa)) form the PBS-linker domain.

This sequence belongs to the phycobilisome linker protein family. The phycobilisome is a hemidiscoidal structure that is composed of two distinct substructures: a core complex and a number of rods radiating from the core.

The protein resides in the plastid. Its subcellular location is the chloroplast. The protein localises to the chloroplast thylakoid membrane. Rod-core linker protein required for attachment of phycocyanin to allophycocyanin in cores of phycobilisomes. Functionally, linker polypeptides determine the state of aggregation and the location of the disk-shaped phycobiliprotein units within the phycobilisome and modulate their spectroscopic properties in order to mediate a directed and optimal energy transfer. This is Phycobilisome rod-core linker polypeptide cpcG (cpcG) from Pyropia yezoensis (Susabi-nori).